Consider the following 102-residue polypeptide: Putative pterin-4-alpha-carbinolamine dehydratase (102 aa).

It belongs to the pterin-4-alpha-carbinolamine dehydratase family.

The enzyme catalyses (4aS,6R)-4a-hydroxy-L-erythro-5,6,7,8-tetrahydrobiopterin = (6R)-L-erythro-6,7-dihydrobiopterin + H2O. This chain is Putative pterin-4-alpha-carbinolamine dehydratase, found in Burkholderia orbicola (strain MC0-3).